The primary structure comprises 299 residues: tRNA dimethylallyltransferase (299 aa).

Gly-10–Thr-17 is a binding site for ATP. Position 12-17 (Thr-12–Thr-17) interacts with substrate. Residues Asp-35–Gln-38 are interaction with substrate tRNA.

Belongs to the IPP transferase family. As to quaternary structure, monomer. Mg(2+) serves as cofactor.

It carries out the reaction adenosine(37) in tRNA + dimethylallyl diphosphate = N(6)-dimethylallyladenosine(37) in tRNA + diphosphate. In terms of biological role, catalyzes the transfer of a dimethylallyl group onto the adenine at position 37 in tRNAs that read codons beginning with uridine, leading to the formation of N6-(dimethylallyl)adenosine (i(6)A). This is tRNA dimethylallyltransferase from Streptococcus thermophilus (strain CNRZ 1066).